Here is a 404-residue protein sequence, read N- to C-terminus: 4-hydroxy-3-methylbut-2-en-1-yl diphosphate synthase (ferredoxin) (404 aa).

[4Fe-4S] cluster contacts are provided by C313, C316, C347, and E354.

This sequence belongs to the IspG family. It depends on [4Fe-4S] cluster as a cofactor.

It carries out the reaction (2E)-4-hydroxy-3-methylbut-2-enyl diphosphate + 2 oxidized [2Fe-2S]-[ferredoxin] + H2O = 2-C-methyl-D-erythritol 2,4-cyclic diphosphate + 2 reduced [2Fe-2S]-[ferredoxin] + H(+). It participates in isoprenoid biosynthesis; isopentenyl diphosphate biosynthesis via DXP pathway; isopentenyl diphosphate from 1-deoxy-D-xylulose 5-phosphate: step 5/6. Functionally, converts 2C-methyl-D-erythritol 2,4-cyclodiphosphate (ME-2,4cPP) into 1-hydroxy-2-methyl-2-(E)-butenyl 4-diphosphate. The protein is 4-hydroxy-3-methylbut-2-en-1-yl diphosphate synthase (ferredoxin) of Crocosphaera subtropica (strain ATCC 51142 / BH68) (Cyanothece sp. (strain ATCC 51142)).